Reading from the N-terminus, the 1182-residue chain is WD repeat-containing protein on Y chromosome (1182 aa).

WD repeat units follow at residues 155 to 199 (EEIT…LRSA), 323 to 362 (RIPL…EPSA), 366 to 405 (GHNG…LLQT), 456 to 495 (THAA…RKII), 508 to 547 (TIDI…VVRN), 595 to 635 (FHTD…RRYN), 740 to 779 (KTGD…IPKA), and 823 to 862 (GHLK…LGTL). Positions 1031 to 1182 (TKAGANLDQP…PKAKTDRETH (152 aa)) are disordered. Low complexity-rich tracts occupy residues 1079 to 1092 (GVSS…VSQG) and 1103 to 1121 (TTSL…PKGS).

This is WD repeat-containing protein on Y chromosome from Drosophila virilis (Fruit fly).